The primary structure comprises 179 residues: Acireductone dioxygenase (179 aa).

His-99, His-101, Glu-105, and His-144 together coordinate Fe(2+). Residues His-99, His-101, Glu-105, and His-144 each contribute to the Ni(2+) site.

It belongs to the acireductone dioxygenase (ARD) family. Monomer. It depends on Fe(2+) as a cofactor. The cofactor is Ni(2+).

The catalysed reaction is 1,2-dihydroxy-5-(methylsulfanyl)pent-1-en-3-one + O2 = 3-(methylsulfanyl)propanoate + CO + formate + 2 H(+). It catalyses the reaction 1,2-dihydroxy-5-(methylsulfanyl)pent-1-en-3-one + O2 = 4-methylsulfanyl-2-oxobutanoate + formate + 2 H(+). It participates in amino-acid biosynthesis; L-methionine biosynthesis via salvage pathway; L-methionine from S-methyl-5-thio-alpha-D-ribose 1-phosphate: step 5/6. In terms of biological role, catalyzes 2 different reactions between oxygen and the acireductone 1,2-dihydroxy-3-keto-5-methylthiopentene (DHK-MTPene) depending upon the metal bound in the active site. Fe-containing acireductone dioxygenase (Fe-ARD) produces formate and 2-keto-4-methylthiobutyrate (KMTB), the alpha-ketoacid precursor of methionine in the methionine recycle pathway. Ni-containing acireductone dioxygenase (Ni-ARD) produces methylthiopropionate, carbon monoxide and formate, and does not lie on the methionine recycle pathway. This Exiguobacterium sibiricum (strain DSM 17290 / CCUG 55495 / CIP 109462 / JCM 13490 / 255-15) protein is Acireductone dioxygenase.